A 687-amino-acid polypeptide reads, in one-letter code: Tripartite terminase subunit 3 (687 aa).

The segment at His67–Ala91 is disordered. Positions Ile221 to Thr228 match the Walker A motif motif. A Walker B motif motif is present at residues Leu316 to Glu321. Glu321 serves as the catalytic For ATPase activity. Catalysis depends on for nuclease activity residues Asp476, Glu550, and Asp662.

It belongs to the herpesviridae TRM3 protein family. As to quaternary structure, interacts with the terminase subunits TRM1 and TRM2. Interacts with portal protein.

It is found in the host nucleus. Its function is as follows. Component of the molecular motor that translocates viral genomic DNA in empty capsid during DNA packaging. Forms a tripartite terminase complex together with TRM1 and TRM2 in the host cytoplasm. Once the complex reaches the host nucleus, it interacts with the capsid portal vertex. This portal forms a ring in which genomic DNA is translocated into the capsid. TRM3 carries an RNase H-like nuclease activity that plays an important role for the cleavage of concatemeric viral DNA into unit length genomes. The polypeptide is Tripartite terminase subunit 3 (Human herpesvirus 8 type P (isolate GK18) (HHV-8)).